A 394-amino-acid polypeptide reads, in one-letter code: MTNIIRQFLRQEAAGGLILIIAAAIALLMANSALQGVYQSFLDIPVSIKIASLDISKPLLLWINDGLMAVFFLMVGLEVKRELMEGSLAGRDKAVFPAIAALGGMLAPALIYLLFNGADEVTRQGWAIPAATDIAFALGVMALLGNRVPTGLKVFLLALAIIDDLGVIIIIALFYTQQVSLQSLGIAAAAIALLAYMNWRGVGKTSAYLLVGLVLWVCILKSGVHATLAGVIVGFMIPLHTQDQRSPSESLEHGLHPWVAYLILPLFAFANAGVSLQGVSLSGLTSLLPMGIATGLFIGKPLGIFTFSWLAVKLGIAKLPDAINFKQIFAVSVLCGIGFTMSIFIASLAFEGTDIALTTYSKLGILLGSTTAAVVGYSLLRLVLPARRKAVNVR.

11 helical membrane passes run 14–34 (AGGL…NSAL), 59–79 (LLLW…GLEV), 95–115 (VFPA…YLLF), 125–145 (GWAI…ALLG), 154–174 (VFLL…IALF), 179–199 (VSLQ…YMNW), 213–233 (LVLW…GVIV), 254–274 (GLHP…NAGV), 292–312 (IATG…WLAV), 328–348 (IFAV…IASL), and 363–383 (LGIL…LRLV).

The protein belongs to the NhaA Na(+)/H(+) (TC 2.A.33) antiporter family.

The protein resides in the cell inner membrane. It carries out the reaction Na(+)(in) + 2 H(+)(out) = Na(+)(out) + 2 H(+)(in). Functionally, na(+)/H(+) antiporter that extrudes sodium in exchange for external protons. This chain is Na(+)/H(+) antiporter NhaA, found in Yersinia pseudotuberculosis serotype IB (strain PB1/+).